Here is a 386-residue protein sequence, read N- to C-terminus: GTPase Obg (386 aa).

The region spanning 1-159 (MKFVDEASIL…RELLLELMLL (159 aa)) is the Obg domain. The disordered stretch occupies residues 127-147 (NTRFKSSVNRTPRQKTNGTPG). The segment covering 129-145 (RFKSSVNRTPRQKTNGT) has biased composition (polar residues). Residues 160–333 (ADVGMLGMPN…LCWDVMTFII (174 aa)) form the OBG-type G domain. GTP is bound by residues 166-173 (GMPNAGKS), 191-195 (FTTLV), 213-216 (DIPG), 283-286 (NKID), and 314-316 (SAA). The Mg(2+) site is built by serine 173 and threonine 193.

This sequence belongs to the TRAFAC class OBG-HflX-like GTPase superfamily. OBG GTPase family. In terms of assembly, monomer. Mg(2+) serves as cofactor.

The protein resides in the cytoplasm. An essential GTPase which binds GTP, GDP and possibly (p)ppGpp with moderate affinity, with high nucleotide exchange rates and a fairly low GTP hydrolysis rate. Plays a role in control of the cell cycle, stress response, ribosome biogenesis and in those bacteria that undergo differentiation, in morphogenesis control. The protein is GTPase Obg of Escherichia coli (strain UTI89 / UPEC).